We begin with the raw amino-acid sequence, 186 residues long: Potassium-transporting ATPase KdpC subunit (186 aa).

The chain crosses the membrane as a helical span at residues 10-30; the sequence is LTIITMVLCGFLFPLAITLIG.

Belongs to the KdpC family. In terms of assembly, the system is composed of three essential subunits: KdpA, KdpB and KdpC.

It localises to the cell membrane. Its function is as follows. Part of the high-affinity ATP-driven potassium transport (or Kdp) system, which catalyzes the hydrolysis of ATP coupled with the electrogenic transport of potassium into the cytoplasm. This subunit acts as a catalytic chaperone that increases the ATP-binding affinity of the ATP-hydrolyzing subunit KdpB by the formation of a transient KdpB/KdpC/ATP ternary complex. The polypeptide is Potassium-transporting ATPase KdpC subunit (Staphylococcus aureus (strain MSSA476)).